A 250-amino-acid chain; its full sequence is 2-C-methyl-D-erythritol 4-phosphate cytidylyltransferase (250 aa).

This sequence belongs to the IspD/TarI cytidylyltransferase family. IspD subfamily.

The catalysed reaction is 2-C-methyl-D-erythritol 4-phosphate + CTP + H(+) = 4-CDP-2-C-methyl-D-erythritol + diphosphate. It participates in isoprenoid biosynthesis; isopentenyl diphosphate biosynthesis via DXP pathway; isopentenyl diphosphate from 1-deoxy-D-xylulose 5-phosphate: step 2/6. In terms of biological role, catalyzes the formation of 4-diphosphocytidyl-2-C-methyl-D-erythritol from CTP and 2-C-methyl-D-erythritol 4-phosphate (MEP). In Streptomyces avermitilis (strain ATCC 31267 / DSM 46492 / JCM 5070 / NBRC 14893 / NCIMB 12804 / NRRL 8165 / MA-4680), this protein is 2-C-methyl-D-erythritol 4-phosphate cytidylyltransferase.